We begin with the raw amino-acid sequence, 96 residues long: Large ribosomal subunit protein bL27 (96 aa).

Residues 1–9 (MLKFDIQHF) constitute a propeptide that is removed on maturation. The interval 1-33 (MLKFDIQHFAHKKGGGSTSNGRDSESKRLGAKR) is disordered. The segment covering 22–33 (RDSESKRLGAKR) has biased composition (basic and acidic residues).

The protein belongs to the bacterial ribosomal protein bL27 family. Post-translationally, the N-terminus is cleaved by ribosomal processing cysteine protease Prp.

The sequence is that of Large ribosomal subunit protein bL27 from Listeria innocua serovar 6a (strain ATCC BAA-680 / CLIP 11262).